A 266-amino-acid polypeptide reads, in one-letter code: UPF0328 protein ECU03_0130 (266 aa).

This sequence belongs to the UPF0328 family.

The protein is UPF0328 protein ECU03_0130 of Encephalitozoon cuniculi (strain GB-M1) (Microsporidian parasite).